A 495-amino-acid polypeptide reads, in one-letter code: Aspartyl/glutamyl-tRNA(Asn/Gln) amidotransferase subunit B (495 aa).

This sequence belongs to the GatB/GatE family. GatB subfamily. Heterotrimer of A, B and C subunits.

It catalyses the reaction L-glutamyl-tRNA(Gln) + L-glutamine + ATP + H2O = L-glutaminyl-tRNA(Gln) + L-glutamate + ADP + phosphate + H(+). The enzyme catalyses L-aspartyl-tRNA(Asn) + L-glutamine + ATP + H2O = L-asparaginyl-tRNA(Asn) + L-glutamate + ADP + phosphate + 2 H(+). In terms of biological role, allows the formation of correctly charged Asn-tRNA(Asn) or Gln-tRNA(Gln) through the transamidation of misacylated Asp-tRNA(Asn) or Glu-tRNA(Gln) in organisms which lack either or both of asparaginyl-tRNA or glutaminyl-tRNA synthetases. The reaction takes place in the presence of glutamine and ATP through an activated phospho-Asp-tRNA(Asn) or phospho-Glu-tRNA(Gln). The chain is Aspartyl/glutamyl-tRNA(Asn/Gln) amidotransferase subunit B from Rippkaea orientalis (strain PCC 8801 / RF-1) (Cyanothece sp. (strain PCC 8801)).